A 77-amino-acid polypeptide reads, in one-letter code: Acyl carrier protein (77 aa).

A Carrier domain is found at 2 to 77 (SDIAARVKKI…DATKFISEAQ (76 aa)). S37 is modified (O-(pantetheine 4'-phosphoryl)serine).

It belongs to the acyl carrier protein (ACP) family. 4'-phosphopantetheine is transferred from CoA to a specific serine of apo-ACP by AcpS. This modification is essential for activity because fatty acids are bound in thioester linkage to the sulfhydryl of the prosthetic group.

It is found in the cytoplasm. It participates in lipid metabolism; fatty acid biosynthesis. Carrier of the growing fatty acid chain in fatty acid biosynthesis. The chain is Acyl carrier protein from Jannaschia sp. (strain CCS1).